We begin with the raw amino-acid sequence, 197 residues long: GTP cyclohydrolase-2 (197 aa).

50–54 (RIHSE) contacts GTP. The Zn(2+) site is built by C55, C66, and C68. Residues Q71, 93–95 (EGR), and T115 each bind GTP. The active-site Proton acceptor is the D127. Catalysis depends on R129, which acts as the Nucleophile. Residues T150 and K155 each contribute to the GTP site.

This sequence belongs to the GTP cyclohydrolase II family. Zn(2+) is required as a cofactor.

The enzyme catalyses GTP + 4 H2O = 2,5-diamino-6-hydroxy-4-(5-phosphoribosylamino)-pyrimidine + formate + 2 phosphate + 3 H(+). It functions in the pathway cofactor biosynthesis; riboflavin biosynthesis; 5-amino-6-(D-ribitylamino)uracil from GTP: step 1/4. Catalyzes the conversion of GTP to 2,5-diamino-6-ribosylamino-4(3H)-pyrimidinone 5'-phosphate (DARP), formate and pyrophosphate. This is GTP cyclohydrolase-2 from Tolumonas auensis (strain DSM 9187 / NBRC 110442 / TA 4).